A 521-amino-acid chain; its full sequence is Cytochrome P450 1A1 (521 aa).

F229 lines the substrate pocket. Residue C463 coordinates heme.

It belongs to the cytochrome P450 family. Heme is required as a cofactor.

The protein localises to the endoplasmic reticulum membrane. It localises to the microsome membrane. It catalyses the reaction an organic molecule + reduced [NADPH--hemoprotein reductase] + O2 = an alcohol + oxidized [NADPH--hemoprotein reductase] + H2O + H(+). In terms of biological role, cytochromes P450 are a group of heme-thiolate monooxygenases. They oxidize a variety of structurally unrelated compounds, including steroids, fatty acids, and xenobiotics. The polypeptide is Cytochrome P450 1A1 (cyp1a1) (Oryzias latipes (Japanese rice fish)).